Consider the following 390-residue polypeptide: Succinate--CoA ligase [ADP-forming] subunit beta (390 aa).

The ATP-grasp domain occupies 9-248 (KEILRRHKAN…ITEEDPLEVQ (240 aa)). ATP is bound by residues K50, 57 to 59 (GRG), E103, I106, and E111. Residues N203 and D217 each coordinate Mg(2+). Substrate is bound by residues N268 and 325–327 (GIV).

It belongs to the succinate/malate CoA ligase beta subunit family. Heterotetramer of two alpha and two beta subunits. It depends on Mg(2+) as a cofactor.

It catalyses the reaction succinate + ATP + CoA = succinyl-CoA + ADP + phosphate. The enzyme catalyses GTP + succinate + CoA = succinyl-CoA + GDP + phosphate. It participates in carbohydrate metabolism; tricarboxylic acid cycle; succinate from succinyl-CoA (ligase route): step 1/1. Succinyl-CoA synthetase functions in the citric acid cycle (TCA), coupling the hydrolysis of succinyl-CoA to the synthesis of either ATP or GTP and thus represents the only step of substrate-level phosphorylation in the TCA. The beta subunit provides nucleotide specificity of the enzyme and binds the substrate succinate, while the binding sites for coenzyme A and phosphate are found in the alpha subunit. The sequence is that of Succinate--CoA ligase [ADP-forming] subunit beta from Leptospira interrogans serogroup Icterohaemorrhagiae serovar copenhageni (strain Fiocruz L1-130).